The primary structure comprises 212 residues: Cytidylate kinase (212 aa).

9-17 contacts ATP; it reads GPAAAGKGT.

It belongs to the cytidylate kinase family. Type 1 subfamily.

The protein localises to the cytoplasm. The catalysed reaction is CMP + ATP = CDP + ADP. It catalyses the reaction dCMP + ATP = dCDP + ADP. The chain is Cytidylate kinase from Rhizobium meliloti (strain 1021) (Ensifer meliloti).